The sequence spans 642 residues: Putative ATP-binding protein YdiF (642 aa).

ABC transporter domains follow at residues 4-259 and 327-541; these read LQVN…EKDL and LRVQ…ELEK. ATP-binding positions include 36-43 and 360-367; these read GRNGAGKS and GPNGIGKS. Basic and acidic residues-rich tracts occupy residues 541-550 and 557-567; these read KMNQQEETDK and SDSKRSYEEEK. A disordered region spans residues 541-567; it reads KMNQQEETDKTPATVKSDSKRSYEEEK.

This sequence belongs to the ABC transporter superfamily. ABCF family. YdiF subfamily.

The polypeptide is Putative ATP-binding protein YdiF (ydiF) (Bacillus subtilis (strain 168)).